The following is a 398-amino-acid chain: 1-deoxy-D-xylulose 5-phosphate reductoisomerase (398 aa).

The NADPH site is built by T11, G12, S13, I14, and N125. K126 is a 1-deoxy-D-xylulose 5-phosphate binding site. An NADPH-binding site is contributed by E127. D151 serves as a coordination point for Mn(2+). 1-deoxy-D-xylulose 5-phosphate is bound by residues S152, E153, S186, and H209. Residue E153 coordinates Mn(2+). Residue G215 participates in NADPH binding. S222, N227, K228, and E231 together coordinate 1-deoxy-D-xylulose 5-phosphate. E231 is a Mn(2+) binding site.

Belongs to the DXR family. Mg(2+) is required as a cofactor. Requires Mn(2+) as cofactor.

It carries out the reaction 2-C-methyl-D-erythritol 4-phosphate + NADP(+) = 1-deoxy-D-xylulose 5-phosphate + NADPH + H(+). The protein operates within isoprenoid biosynthesis; isopentenyl diphosphate biosynthesis via DXP pathway; isopentenyl diphosphate from 1-deoxy-D-xylulose 5-phosphate: step 1/6. Catalyzes the NADPH-dependent rearrangement and reduction of 1-deoxy-D-xylulose-5-phosphate (DXP) to 2-C-methyl-D-erythritol 4-phosphate (MEP). The sequence is that of 1-deoxy-D-xylulose 5-phosphate reductoisomerase from Acinetobacter baumannii (strain AB307-0294).